The primary structure comprises 258 residues: L-aspartate dehydrogenase 1 (258 aa).

NAD(+)-binding residues include Ala-121 and Asn-181. His-211 is a catalytic residue.

It belongs to the L-aspartate dehydrogenase family.

It carries out the reaction L-aspartate + NADP(+) + H2O = oxaloacetate + NH4(+) + NADPH + H(+). The enzyme catalyses L-aspartate + NAD(+) + H2O = oxaloacetate + NH4(+) + NADH + H(+). The protein operates within cofactor biosynthesis; NAD(+) biosynthesis; iminoaspartate from L-aspartate (dehydrogenase route): step 1/1. In terms of biological role, specifically catalyzes the NAD or NADP-dependent dehydrogenation of L-aspartate to iminoaspartate. The chain is L-aspartate dehydrogenase 1 from Bordetella pertussis (strain Tohama I / ATCC BAA-589 / NCTC 13251).